A 75-amino-acid chain; its full sequence is DNA-directed RNA polymerase subunit omega (75 aa).

It belongs to the RNA polymerase subunit omega family. In terms of assembly, in cyanobacteria the RNAP catalytic core is composed of 2 alpha, 1 beta, 1 beta', 1 gamma and 1 omega subunit. When a sigma factor is associated with the core the holoenzyme is formed, which can initiate transcription.

It carries out the reaction RNA(n) + a ribonucleoside 5'-triphosphate = RNA(n+1) + diphosphate. Promotes RNA polymerase assembly. Latches the N- and C-terminal regions of the beta' subunit thereby facilitating its interaction with the beta and alpha subunits. This Prochlorococcus marinus (strain MIT 9313) protein is DNA-directed RNA polymerase subunit omega.